The primary structure comprises 358 residues: Methylthioribose-1-phosphate isomerase (358 aa).

Residues 54–56 (RGA), arginine 96, and glutamine 205 each bind substrate. The Proton donor role is filled by aspartate 246. Position 256–257 (256–257 (GK)) interacts with substrate.

Belongs to the eIF-2B alpha/beta/delta subunits family. MtnA subfamily.

It carries out the reaction 5-(methylsulfanyl)-alpha-D-ribose 1-phosphate = 5-(methylsulfanyl)-D-ribulose 1-phosphate. It participates in amino-acid biosynthesis; L-methionine biosynthesis via salvage pathway; L-methionine from S-methyl-5-thio-alpha-D-ribose 1-phosphate: step 1/6. Functionally, catalyzes the interconversion of methylthioribose-1-phosphate (MTR-1-P) into methylthioribulose-1-phosphate (MTRu-1-P). The polypeptide is Methylthioribose-1-phosphate isomerase (Pseudomonas putida (strain ATCC 47054 / DSM 6125 / CFBP 8728 / NCIMB 11950 / KT2440)).